The chain runs to 98 residues: NADH-ubiquinone oxidoreductase chain 4L (98 aa).

The next 3 helical transmembrane spans lie at 1-21 (MTMV…GLLM), 29-49 (SLLC…ITIL), and 61-81 (IILL…LVMV).

The protein belongs to the complex I subunit 4L family. In terms of assembly, core subunit of respiratory chain NADH dehydrogenase (Complex I) which is composed of 45 different subunits.

The protein resides in the mitochondrion inner membrane. It carries out the reaction a ubiquinone + NADH + 5 H(+)(in) = a ubiquinol + NAD(+) + 4 H(+)(out). In terms of biological role, core subunit of the mitochondrial membrane respiratory chain NADH dehydrogenase (Complex I) which catalyzes electron transfer from NADH through the respiratory chain, using ubiquinone as an electron acceptor. Part of the enzyme membrane arm which is embedded in the lipid bilayer and involved in proton translocation. The protein is NADH-ubiquinone oxidoreductase chain 4L (MT-ND4L) of Ommatophoca rossii (Ross seal).